The primary structure comprises 615 residues: Vitamin B12 transporter BtuB (615 aa).

The first 20 residues, 1-20 (MIKKVSLMTALSVTAFSGWA), serve as a signal peptide directing secretion. Residues 25 to 32 (DSLVVTAN) carry the TonB box motif. The TBDR plug domain occupies 37–151 (PANTVLAPTS…IGGVVNIITT (115 aa)). Cyanocob(III)alamin is bound by residues Ser84, Asn91, and 109–110 (VT). The TBDR beta-barrel domain maps to 154 to 615 (KDGTTLNAGV…EYTLSGSYTF (462 aa)). A run of 3 beta stranded transmembrane segments spans residues 157–164 (TTLNAGVG), 168–177 (YQNYGGSTQQ), and 183–194 (TRVTLAGDYTYT). Residues Asp198, Gln210, Asp212, and Asp214 each contribute to the Ca(2+) site. 2 beta stranded membrane-spanning segments follow: residues 216–226 (YMNKTIYGALE) and 231–247 (DQWS…NRTA). 2 residues coordinate Ca(2+): Tyr248 and Asp249. Position 250 (Ala250) interacts with cyanocob(III)alamin. A Ca(2+)-binding site is contributed by Asp262. 17 beta stranded membrane-spanning segments follow: residues 264-278 (RQLY…LRFN), 280-297 (GIFH…KDYN), 310-326 (TLDE…NSVD), 329-338 (HGNVGAGVDW), 354-370 (TNLR…QKFG), 372-382 (FTLEGAARSDD), 386-401 (FGRH…WEFI), 404-418 (YRFI…KAPN), 435-444 (ESKQWEGAFE), 450-459 (VSWRVSAYRN), 474-491 (YYNV…TASF), 495-510 (PLTH…ARNA), 518-530 (RRAK…QLDT), 536-551 (DWSL…YDTD), 559-573 (KVKM…LAVS), 586-597 (IANLFDKDYETV), and 603-615 (AGRE…SYTF). Thr310 serves as a coordination point for cyanocob(III)alamin. Position 518 (Arg518) interacts with cyanocob(III)alamin. The short motif at 598–615 (YGYETAGREYTLSGSYTF) is the TonB C-terminal box element.

This sequence belongs to the TonB-dependent receptor family. BtuB (TC 1.B.14.3.1) subfamily.

It is found in the cell outer membrane. Involved in the active translocation of vitamin B12 (cyanocobalamin) across the outer membrane to the periplasmic space. It derives its energy for transport by interacting with the trans-periplasmic membrane protein TonB. This chain is Vitamin B12 transporter BtuB, found in Enterobacter sp. (strain 638).